The primary structure comprises 707 residues: Methionine--tRNA ligase (707 aa).

The 'HIGH' region motif lies at 13-23; sequence PYANGNFHIGH. Cys147, Cys150, Cys160, and Cys163 together coordinate Zn(2+). The 'KMSKS' region motif lies at 344–348; sequence KMSKS. Residue Lys347 participates in ATP binding. The tRNA-binding domain maps to 601 to 707; the sequence is DFAKVDLRIA…PGATPGMRIH (107 aa).

It belongs to the class-I aminoacyl-tRNA synthetase family. MetG type 1 subfamily. As to quaternary structure, homodimer. Requires Zn(2+) as cofactor.

It is found in the cytoplasm. The enzyme catalyses tRNA(Met) + L-methionine + ATP = L-methionyl-tRNA(Met) + AMP + diphosphate. Functionally, is required not only for elongation of protein synthesis but also for the initiation of all mRNA translation through initiator tRNA(fMet) aminoacylation. The chain is Methionine--tRNA ligase from Polaromonas naphthalenivorans (strain CJ2).